The primary structure comprises 111 residues: UPF0321 protein P20C8.02c (111 aa).

A signal peptide spans 1 to 17; it reads MLLLFCICCVFIKLVLA. A glycan (N-linked (GlcNAc...) asparagine) is linked at asparagine 20.

Belongs to the UPF0321 family.

The chain is UPF0321 protein P20C8.02c from Schizosaccharomyces pombe (strain 972 / ATCC 24843) (Fission yeast).